The sequence spans 421 residues: Nuclear speckle RNA-binding protein B (421 aa).

Disordered regions lie at residues 1 to 64 (MDNR…VNIY), 86 to 114 (TGQT…MVDT), and 197 to 226 (TDPQ…GIPH). Positions 33–44 (PLAPPHPQPQPP) are enriched in pro residues. Over residues 89–103 (TSTSTTSSSSSSSTS) the composition is skewed to low complexity. In terms of domain architecture, RRM spans 323–409 (NTLYVEGLPS…KILRLQFFRN (87 aa)).

Isoform 1: Expressed in root meristems, lateral root primordia, root vascular tissues and cotyledon vascular tissues. Isoform 2: Expressed in root meristems, lateral root primordia and root vascular tissues.

It is found in the nucleus speckle. Alternative splicing (AS) regulator that binds to specific mRNAs and modulates auxin effects on the transcriptome. Displaced from its targets upon binding to AS competitor long non-coding RNA (ASCO-RNA). This is Nuclear speckle RNA-binding protein B from Arabidopsis thaliana (Mouse-ear cress).